Here is a 549-residue protein sequence, read N- to C-terminus: MSTFGYRRGLSKYESIDEDELLASLTAEELKELERELEDIEPDRNLPVGLRQKSLTEKTPTGNFSREALMAYWEKESQKLLEKERLGECGKLAEEDKEESEEELIFTESNSEVSEEVCTEEEEESTEEEEEEEEEDSEEEEVTTEVTKHINGTVSHNGVNPDNSKPKTFKSQIENINLTNGNSGGTQRNTESPAAIHPCGNPTVIEDALEKIKNNDPDTTEVNLNNIENITTQTLSRFAEALKENTVVKTFSLANTHADDAAAIAIAEMLKVNEHITSVNVESNFITGKGILAIMRALQHNTVLTELRFHNQRHIMGSQVEMEIVKLLKENTTLLRLGYHFELPGPRMSMTSILTRNMDKQRQKRMQEQKQQEGHDGGATLRTKVWQRGTPGSSPYASPRQSPWSSPKVSKKVHTGRSRPPSPVAPPPPPPPPPLPPHMLPPPPPPPAPPLPGKKLITRNIAEVIKQQESAQRALQNGQRKKKGKKVKKQPNNILKEIKNSLRSVQEKKMEESSRPSTPQRSAHENLMEAIRGSSIRQLRRVEVPEALR.

The interval 1-42 is tropomyosin-binding; the sequence is MSTFGYRRGLSKYESIDEDELLASLTAEELKELERELEDIEP. Residues 1–47 are interaction with tropomyosin alpha; it reads MSTFGYRRGLSKYESIDEDELLASLTAEELKELERELEDIEPDRNLP. 3 interaction with actin regions span residues 1–164, 165–499, and 523–542; these read MSTF…PDNS, KPKT…KEIK, and AHENLMEAIRGSSIRQLRRV. Phosphoserine is present on residues Ser-11, Ser-15, and Ser-24. 4 disordered regions span residues 91 to 166, 179 to 200, 358 to 455, and 469 to 534; these read KLAE…NSKP, TNGNSGGTQRNTESPAAIHPCG, MDKQ…PGKK, and ESAQ…IRGS. 2 stretches are compositionally biased toward acidic residues: residues 95–105 and 113–143; these read EDKEESEEELI and VSEEVCTEEEEESTEEEEEEEEEDSEEEEVT. Composition is skewed to polar residues over residues 150-163 and 179-192; these read INGTVSHNGVNPDN and TNGNSGGTQRNTES. Residues 358 to 376 show a composition bias toward basic and acidic residues; it reads MDKQRQKRMQEQKQQEGHD. The span at 390-401 shows a compositional bias: polar residues; the sequence is TPGSSPYASPRQ. Ser-406 carries the post-translational modification Phosphoserine. Positions 420 to 452 are enriched in pro residues; that stretch reads PPSPVAPPPPPPPPPLPPHMLPPPPPPPAPPLP. Residues 457 to 515 adopt a coiled-coil conformation; that stretch reads ITRNIAEVIKQQESAQRALQNGQRKKKGKKVKKQPNNILKEIKNSLRSVQEKKMEESSR. A compositionally biased stretch (polar residues) spans 469–478; the sequence is ESAQRALQNG. Over residues 479–489 the composition is skewed to basic residues; sequence QRKKKGKKVKK. Basic and acidic residues predominate over residues 496–514; it reads KEIKNSLRSVQEKKMEESS. A WH2 domain is found at 523–542; the sequence is AHENLMEAIRGSSIRQLRRV.

It belongs to the tropomodulin family. In terms of assembly, can bind at least three actin monomers and thereby provides a nucleus for actin filament formation. Interacts (via N-terminus) with tropomyosin alpha (TPM1) (via N-terminus). May also interact with TPM2 (via N-terminus). Interacts with FLII.

Its subcellular location is the cytoplasm. The protein resides in the myofibril. The protein localises to the sarcomere. It localises to the m line. It is found in the cytoskeleton. Functionally, mediates nucleation of actin filaments and thereby promotes actin polymerization. Plays a role in the regulation of actin filament length. Required for normal sarcomere organization in the heart, and for normal heart function. This chain is Leiomodin-2 (Lmod2), found in Rattus norvegicus (Rat).